We begin with the raw amino-acid sequence, 211 residues long: Transcriptional regulator NarO (211 aa).

In terms of domain architecture, HTH bat-type spans 154 to 205 (LTARQREVLETAHEMGYFEHPREANATEVAAALDINRSTFTEHLSAAQSKLL).

Activates transcription of the denitrifying genes (nitrate reductase narA and nitrite reductase nirK) under anaerobic conditions. This is Transcriptional regulator NarO from Haloferax volcanii (strain ATCC 29605 / DSM 3757 / JCM 8879 / NBRC 14742 / NCIMB 2012 / VKM B-1768 / DS2) (Halobacterium volcanii).